Here is a 233-residue protein sequence, read N- to C-terminus: MAKLTKRARLIREKVEATKSYDINEAVALLKELATAKFLESVDVAVNLGVDPRKSDQNVRGATVLPHGTGRDVRVAVFTQGANAEAAKEAGAELVGMDELAAQIKAGEMNFDVVIASPDAMRVVGMLGQILGPRGLMPNPKTGTVTPNVAEAVKNAKAGQVRYRNDKNGIIHTTIGKVDFEPAQLKENLEALLGALKKAKPAAAKGVFIKKVSISTTMGAGVAVDQGTLEDAK.

It belongs to the universal ribosomal protein uL1 family. As to quaternary structure, part of the 50S ribosomal subunit.

Functionally, binds directly to 23S rRNA. The L1 stalk is quite mobile in the ribosome, and is involved in E site tRNA release. Its function is as follows. Protein L1 is also a translational repressor protein, it controls the translation of the L11 operon by binding to its mRNA. The chain is Large ribosomal subunit protein uL1 from Shewanella halifaxensis (strain HAW-EB4).